Reading from the N-terminus, the 73-residue chain is Putative sodium channel toxin Ts39 (73 aa).

Positions 1–22 (MKTLNFCLFLVIISSLTVRVFC) are cleaved as a signal peptide. Residues 24–73 (NDRFLTVNDNYVICLYINKSFVNCENLCKAYMNAKDGFCRQPHCFCTDVE) enclose the LCN-type CS-alpha/beta domain. Intrachain disulfides connect cysteine 37–cysteine 62, cysteine 47–cysteine 67, and cysteine 51–cysteine 69.

It belongs to the long (3 C-C) scorpion toxin superfamily. Sodium channel inhibitor family. As to expression, expressed by the venom gland.

The protein resides in the secreted. In terms of biological role, putative sodium channel toxin. This chain is Putative sodium channel toxin Ts39, found in Tityus serrulatus (Brazilian scorpion).